Consider the following 336-residue polypeptide: GTPase Obg (336 aa).

In terms of domain architecture, Obg spans 1-159 (MKFLDQAKIY…RWVWLRLKLI (159 aa)). One can recognise an OBG-type G domain in the interval 160–328 (ADIGLVGLPN…LLRLLQDRVT (169 aa)). GTP-binding positions include 166 to 173 (GLPNAGKS), 191 to 195 (FTTLH), 213 to 216 (DIPG), 280 to 283 (NKCD), and 309 to 311 (SGA). The Mg(2+) site is built by Ser173 and Thr193.

It belongs to the TRAFAC class OBG-HflX-like GTPase superfamily. OBG GTPase family. In terms of assembly, monomer. Mg(2+) is required as a cofactor.

It localises to the cytoplasm. Its function is as follows. An essential GTPase which binds GTP, GDP and possibly (p)ppGpp with moderate affinity, with high nucleotide exchange rates and a fairly low GTP hydrolysis rate. Plays a role in control of the cell cycle, stress response, ribosome biogenesis and in those bacteria that undergo differentiation, in morphogenesis control. The chain is GTPase Obg from Gluconobacter oxydans (strain 621H) (Gluconobacter suboxydans).